We begin with the raw amino-acid sequence, 242 residues long: ATP synthase subunit a (242 aa).

The next 6 membrane-spanning stretches (helical) occupy residues 29 to 49, 84 to 104, 114 to 134, 140 to 160, 189 to 209, and 210 to 230; these read SSIY…LAFY, FIPL…LGMT, IIVT…VGFV, FLTL…MIVI, VIAG…IPLM, and MILI…FTIL.

Belongs to the ATPase A chain family. In terms of assembly, F-type ATPases have 2 components, CF(1) - the catalytic core - and CF(0) - the membrane proton channel. CF(1) has five subunits: alpha(3), beta(3), gamma(1), delta(1), epsilon(1). CF(0) has three main subunits: a(1), b(2) and c(9-12). The alpha and beta chains form an alternating ring which encloses part of the gamma chain. CF(1) is attached to CF(0) by a central stalk formed by the gamma and epsilon chains, while a peripheral stalk is formed by the delta and b chains.

It is found in the cell inner membrane. Functionally, key component of the proton channel; it plays a direct role in the translocation of protons across the membrane. The protein is ATP synthase subunit a of Rickettsia massiliae (strain Mtu5).